The sequence spans 502 residues: Probable glycine dehydrogenase (decarboxylating) subunit 2 (502 aa).

Position 273 is an N6-(pyridoxal phosphate)lysine (lysine 273).

It belongs to the GcvP family. C-terminal subunit subfamily. In terms of assembly, the glycine cleavage system is composed of four proteins: P, T, L and H. In this organism, the P 'protein' is a heterodimer of two subunits. It depends on pyridoxal 5'-phosphate as a cofactor.

It catalyses the reaction N(6)-[(R)-lipoyl]-L-lysyl-[glycine-cleavage complex H protein] + glycine + H(+) = N(6)-[(R)-S(8)-aminomethyldihydrolipoyl]-L-lysyl-[glycine-cleavage complex H protein] + CO2. In terms of biological role, the glycine cleavage system catalyzes the degradation of glycine. The P protein binds the alpha-amino group of glycine through its pyridoxal phosphate cofactor; CO(2) is released and the remaining methylamine moiety is then transferred to the lipoamide cofactor of the H protein. This is Probable glycine dehydrogenase (decarboxylating) subunit 2 from Pyrococcus horikoshii (strain ATCC 700860 / DSM 12428 / JCM 9974 / NBRC 100139 / OT-3).